The sequence spans 272 residues: 3-methyl-2-oxobutanoate hydroxymethyltransferase (272 aa).

Mg(2+) is bound by residues Asp-43 and Asp-82. 3-methyl-2-oxobutanoate contacts are provided by residues 43-44 (DS), Asp-82, and Lys-112. Glu-114 provides a ligand contact to Mg(2+). The active-site Proton acceptor is Glu-179.

Belongs to the PanB family. In terms of assembly, homodecamer; pentamer of dimers. Mg(2+) serves as cofactor.

It localises to the cytoplasm. It catalyses the reaction 3-methyl-2-oxobutanoate + (6R)-5,10-methylene-5,6,7,8-tetrahydrofolate + H2O = 2-dehydropantoate + (6S)-5,6,7,8-tetrahydrofolate. Its pathway is cofactor biosynthesis; (R)-pantothenate biosynthesis; (R)-pantoate from 3-methyl-2-oxobutanoate: step 1/2. Functionally, catalyzes the reversible reaction in which hydroxymethyl group from 5,10-methylenetetrahydrofolate is transferred onto alpha-ketoisovalerate to form ketopantoate. The polypeptide is 3-methyl-2-oxobutanoate hydroxymethyltransferase (Staphylococcus epidermidis (strain ATCC 35984 / DSM 28319 / BCRC 17069 / CCUG 31568 / BM 3577 / RP62A)).